Reading from the N-terminus, the 355-residue chain is Peptide chain release factor 1 (355 aa).

Gln-230 carries the post-translational modification N5-methylglutamine.

Belongs to the prokaryotic/mitochondrial release factor family. Post-translationally, methylated by PrmC. Methylation increases the termination efficiency of RF1.

It localises to the cytoplasm. Its function is as follows. Peptide chain release factor 1 directs the termination of translation in response to the peptide chain termination codons UAG and UAA. The protein is Peptide chain release factor 1 of Geotalea uraniireducens (strain Rf4) (Geobacter uraniireducens).